The following is a 1061-amino-acid chain: MSRFAEVDDQYDPDAVEDRVFDYWDEVDAYERTVEHRADGEDFFFVDGPPYTSGSAHMGTTWNKTLKDAYIRYHRMRGYNVTDRPGYDMHGLPIETKVEERLGFDNKKDIEEFGEQNFIDECKSFAEEQLEGLQEDFKSFGVWMDWDDPYKTVDPEYMEAAWWGFSKAHDRDLVEQGQRSISQCPRCETAIANNEVEYDHVEDPSIYVKFPLAEREGHLVIWTTTPWTVPANTFVAVDEEMTYQAIEVDTGDGTETLYVGEPCVEDVVDHGGYEDYEVVGEHEGSDLVGWRYEHPLREEVPEAPAFEGALEVYGADYVEADRTGLVHSAPGHGEVDFERGQELGLSVFCPVGPDGVYEDAAGDYAGQFVKDADAAIMDDLEAKGLLLSRGTVNHDYGHCWRCDTPIIQMVTDQWFITVTDIKDELLANMEESEWFPQEARDNRFRSFIEESPDWNVSRQRYWGIPIPIWTPDDWSGDVEEAIVVSTREELAERVDQDIDPESVDLHKDTVDDLTITADGTTYTRVPDVFDVWLDSSVASWGTLGYPGNEDDFEELWPADLIMEAHDQTRGWFWSQLGMGSAALGEAPYETVLMHGWALAEDGRKMSKSIGNIVAPQEAIDRHGADPMRLFLLTQNPQGDDMRFSWDEMENRQRDLNILWNVFRFPLPYMRLDDFDPDAVALDEAALETVDEWVLSRLSTVTAEMTDHWENFRQDKALDELLAFIVEDVSRFYIQVVRERMWEEETSESKLAAYATLHHVLVETTKLLAPYAPFVAEEIYGTLTGDGGHETVHMADWPDPDERFRDPQLETDVDIVAAVEEAGSNARQQAERKLRWPVTRVVVAADDDRAAEAVDRHRDLLRDRLNAREIELVEPGSDWEELSYTARADMSVLGPTFGDEAGEVMNAINAVSVTDTAVEALEAAVETELGRDIELTDEMVSFNTETPEGVEGTAFTVDGDDRGVVYVDTALTEDIESEGYAREVIRRVQEMRKDLDLDIEAEIRVDLDIADERVATLVDEHEGLIADEVRAAEFADLNAGHERVWDVESTDITITIDPVSER.

Positions 50-60 (PYTSGSAHMGT) match the 'HIGH' region motif. A 'KMSKS' region motif is present at residues 604-608 (KMSKS). Residue Lys607 participates in ATP binding.

It belongs to the class-I aminoacyl-tRNA synthetase family. IleS type 2 subfamily. In terms of assembly, monomer. Zn(2+) serves as cofactor.

It localises to the cytoplasm. The catalysed reaction is tRNA(Ile) + L-isoleucine + ATP = L-isoleucyl-tRNA(Ile) + AMP + diphosphate. Catalyzes the attachment of isoleucine to tRNA(Ile). As IleRS can inadvertently accommodate and process structurally similar amino acids such as valine, to avoid such errors it has two additional distinct tRNA(Ile)-dependent editing activities. One activity is designated as 'pretransfer' editing and involves the hydrolysis of activated Val-AMP. The other activity is designated 'posttransfer' editing and involves deacylation of mischarged Val-tRNA(Ile). The sequence is that of Isoleucine--tRNA ligase from Natronomonas pharaonis (strain ATCC 35678 / DSM 2160 / CIP 103997 / JCM 8858 / NBRC 14720 / NCIMB 2260 / Gabara) (Halobacterium pharaonis).